Reading from the N-terminus, the 586-residue chain is Penicillin-binding protein activator LpoA (586 aa).

The signal sequence occupies residues 1-26 (MLSILMQGLRLKKCFLPILVMFFLAG). Residue Cys-27 is the site of N-palmitoyl cysteine attachment. A lipid anchor (S-diacylglycerol cysteine) is attached at Cys-27.

This sequence belongs to the LpoA family. As to quaternary structure, interacts with PBP1a.

It localises to the cell outer membrane. Its function is as follows. Regulator of peptidoglycan synthesis that is essential for the function of penicillin-binding protein 1A (PBP1a). The chain is Penicillin-binding protein activator LpoA from Histophilus somni (strain 2336) (Haemophilus somnus).